A 304-amino-acid polypeptide reads, in one-letter code: D-alanine--D-alanine ligase (304 aa).

Positions 103–299 (KLIWQALGLP…FADLCIEILK (197 aa)) constitute an ATP-grasp domain. 129 to 184 (EEKLGLPMFVKPAAEGSSVGVVKVKEKGRLKSVYEELKHLQGEIIAERFIGGGEYS) contributes to the ATP binding site. The Mg(2+) site is built by aspartate 253, glutamate 266, and asparagine 268.

The protein belongs to the D-alanine--D-alanine ligase family. Requires Mg(2+) as cofactor. The cofactor is Mn(2+).

Its subcellular location is the cytoplasm. It carries out the reaction 2 D-alanine + ATP = D-alanyl-D-alanine + ADP + phosphate + H(+). Its pathway is cell wall biogenesis; peptidoglycan biosynthesis. In terms of biological role, cell wall formation. This Neisseria gonorrhoeae (strain ATCC 700825 / FA 1090) protein is D-alanine--D-alanine ligase.